The sequence spans 186 residues: MSKAPVNIVDRPLSKGKGEINISSFAFLFSEMIQYCQDRIKAGHELEKKLSDMGYSIGPRLLELLCVREKNSKRETKLLGILSFIHTTVWKSLFGKPADSLEKSTEADDEYMISDNNMVVNKFISLPKHLSSLNCAAFVAGIIEGILCSAEFPARVTAHNVAVEGKRFPKTVILIKFNPEVIERNA.

It belongs to the TRAPP small subunits family. BET3 subfamily. Part of the multisubunit TRAPP (transport protein particle) complex.

The protein localises to the golgi apparatus. Its subcellular location is the cis-Golgi network. It localises to the endoplasmic reticulum. In terms of biological role, may play a role in vesicular transport from endoplasmic reticulum to Golgi. The polypeptide is Trafficking protein particle complex subunit 5 (trappc5) (Dictyostelium discoideum (Social amoeba)).